The chain runs to 399 residues: 3-sulfinopropanoyl-CoA desulfinase (399 aa).

FAD contacts are provided by residues 121–124 (ICIS), Ser-130, and 153–156 (YWIT). Position 244–245 (244–245 (YN)) interacts with substrate. Residues Arg-273, Gln-340, Ser-344, 367–371 (GGTAQ), and Gln-388 contribute to the FAD site.

The protein belongs to the acyl-CoA dehydrogenase family. In terms of assembly, homotrimer or homotetramer. FAD serves as cofactor.

The catalysed reaction is 3-sulfinopropanoyl-CoA + H2O = propanoyl-CoA + sulfite + H(+). Its function is as follows. Catalyzes the conversion 3-sulfinopropanoyl-CoA (3SP-CoA) to propanoyl-CoA by abstraction of sulfite. Does not show dehydrogenase activity. This is 3-sulfinopropanoyl-CoA desulfinase from Variovorax paradoxus.